The sequence spans 157 residues: Protein Smg homolog (157 aa).

The protein belongs to the Smg family.

This is Protein Smg homolog from Aliivibrio salmonicida (strain LFI1238) (Vibrio salmonicida (strain LFI1238)).